The following is a 178-amino-acid chain: Gamma-crystallin S (178 aa).

The residue at position 2 (Ser-2) is an N-acetylserine. The tract at residues 2-5 (SKAG) is N-terminal arm. 2 Beta/gamma crystallin 'Greek key' domains span residues 6–44 (TKIT…RVEG) and 45–87 (GTWA…RAVH). Residues 88 to 93 (LSSGGQ) form a connecting peptide region. Beta/gamma crystallin 'Greek key' domains are found at residues 94–134 (YKLQ…KVLE) and 135–177 (GAWI…RRIV).

It belongs to the beta/gamma-crystallin family. As to quaternary structure, monomer.

In terms of biological role, crystallins are the dominant structural components of the vertebrate eye lens. This Bos taurus (Bovine) protein is Gamma-crystallin S (CRYGS).